A 263-amino-acid chain; its full sequence is uncharacterized protein (263 aa).

The first 22 residues, 1 to 22 (MEYLKRLALLISVIILTIFIMG), serve as a signal peptide directing secretion. Cys-23 is lipidated: N-palmitoyl cysteine. Residue Cys-23 is the site of S-diacylglycerol cysteine attachment.

Belongs to the staphylococcal tandem lipoprotein family.

The protein localises to the cell membrane. This is an uncharacterized protein from Staphylococcus aureus (strain COL).